The chain runs to 601 residues: NADH-quinone oxidoreductase subunit C/D (601 aa).

Residues 1 to 192 (MIVPDLVADA…PPYSLTEDQE (192 aa)) form an NADH dehydrogenase I subunit C region. An NADH dehydrogenase I subunit D region spans residues 216 to 601 (DFMFLNLGPN…IDFVMADVDR (386 aa)).

This sequence in the N-terminal section; belongs to the complex I 30 kDa subunit family. In the C-terminal section; belongs to the complex I 49 kDa subunit family. As to quaternary structure, NDH-1 is composed of 13 different subunits. Subunits NuoB, CD, E, F, and G constitute the peripheral sector of the complex.

Its subcellular location is the cell inner membrane. It catalyses the reaction a quinone + NADH + 5 H(+)(in) = a quinol + NAD(+) + 4 H(+)(out). Its function is as follows. NDH-1 shuttles electrons from NADH, via FMN and iron-sulfur (Fe-S) centers, to quinones in the respiratory chain. The immediate electron acceptor for the enzyme in this species is believed to be ubiquinone. Couples the redox reaction to proton translocation (for every two electrons transferred, four hydrogen ions are translocated across the cytoplasmic membrane), and thus conserves the redox energy in a proton gradient. The protein is NADH-quinone oxidoreductase subunit C/D of Gluconacetobacter diazotrophicus (strain ATCC 49037 / DSM 5601 / CCUG 37298 / CIP 103539 / LMG 7603 / PAl5).